A 208-amino-acid polypeptide reads, in one-letter code: Cytochrome c biogenesis ATP-binding export protein CcmA (208 aa).

One can recognise an ABC transporter domain in the interval 3 to 206 (LSGKDLAAHR…LEKFVPSQER (204 aa)). Residue 35 to 42 (GPNGIGKS) participates in ATP binding.

This sequence belongs to the ABC transporter superfamily. CcmA exporter (TC 3.A.1.107) family. In terms of assembly, the complex is composed of two ATP-binding proteins (CcmA) and two transmembrane proteins (CcmB).

It is found in the cell inner membrane. The catalysed reaction is heme b(in) + ATP + H2O = heme b(out) + ADP + phosphate + H(+). Its function is as follows. Part of the ABC transporter complex CcmAB involved in the biogenesis of c-type cytochromes; once thought to export heme, this seems not to be the case, but its exact role is uncertain. Responsible for energy coupling to the transport system. The sequence is that of Cytochrome c biogenesis ATP-binding export protein CcmA from Bartonella quintana (strain Toulouse) (Rochalimaea quintana).